A 492-amino-acid polypeptide reads, in one-letter code: ATP synthase subunit beta, chloroplastic (492 aa).

Position 170 to 177 (170 to 177 (GGAGVGKT)) interacts with ATP.

Belongs to the ATPase alpha/beta chains family. F-type ATPases have 2 components, CF(1) - the catalytic core - and CF(0) - the membrane proton channel. CF(1) has five subunits: alpha(3), beta(3), gamma(1), delta(1), epsilon(1). CF(0) has four main subunits: a(1), b(1), b'(1) and c(9-12).

The protein resides in the plastid. Its subcellular location is the chloroplast thylakoid membrane. It catalyses the reaction ATP + H2O + 4 H(+)(in) = ADP + phosphate + 5 H(+)(out). In terms of biological role, produces ATP from ADP in the presence of a proton gradient across the membrane. The catalytic sites are hosted primarily by the beta subunits. The polypeptide is ATP synthase subunit beta, chloroplastic (Marchantia polymorpha (Common liverwort)).